Reading from the N-terminus, the 652-residue chain is Acetyl-coenzyme A synthetase (652 aa).

CoA contacts are provided by residues 191–194 (RAGR), threonine 311, and asparagine 335. ATP-binding positions include 387–389 (GEP), 411–416 (DTWWQT), aspartate 500, and arginine 515. Serine 523 provides a ligand contact to CoA. An ATP-binding site is contributed by arginine 526. Valine 537, histidine 539, and isoleucine 542 together coordinate Mg(2+). Arginine 584 is a CoA binding site. The residue at position 609 (lysine 609) is an N6-acetyllysine.

Belongs to the ATP-dependent AMP-binding enzyme family. Requires Mg(2+) as cofactor. Post-translationally, acetylated. Deacetylation by the SIR2-homolog deacetylase activates the enzyme.

The catalysed reaction is acetate + ATP + CoA = acetyl-CoA + AMP + diphosphate. Its function is as follows. Catalyzes the conversion of acetate into acetyl-CoA (AcCoA), an essential intermediate at the junction of anabolic and catabolic pathways. Acs undergoes a two-step reaction. In the first half reaction, Acs combines acetate with ATP to form acetyl-adenylate (AcAMP) intermediate. In the second half reaction, it can then transfer the acetyl group from AcAMP to the sulfhydryl group of CoA, forming the product AcCoA. Enables the cell to use acetate during aerobic growth to generate energy via the TCA cycle, and biosynthetic compounds via the glyoxylate shunt. Acetylates CheY, the response regulator involved in flagellar movement and chemotaxis. This is Acetyl-coenzyme A synthetase from Serratia proteamaculans (strain 568).